The primary structure comprises 490 residues: Bifunctional protein HldE (490 aa).

A ribokinase region spans residues 1–330 (MERKNVESLF…GSLGFQHGEG (330 aa)). Position 205-208 (205-208 (NRKE)) interacts with ATP. The active site involves Asp275. Residues 356-490 (FTNGCFDLLH…EKILKAYGEE (135 aa)) form a cytidylyltransferase region.

The protein in the N-terminal section; belongs to the carbohydrate kinase PfkB family. In the C-terminal section; belongs to the cytidylyltransferase family. As to quaternary structure, homodimer.

The enzyme catalyses D-glycero-beta-D-manno-heptose 7-phosphate + ATP = D-glycero-beta-D-manno-heptose 1,7-bisphosphate + ADP + H(+). It catalyses the reaction D-glycero-beta-D-manno-heptose 1-phosphate + ATP + H(+) = ADP-D-glycero-beta-D-manno-heptose + diphosphate. It participates in nucleotide-sugar biosynthesis; ADP-L-glycero-beta-D-manno-heptose biosynthesis; ADP-L-glycero-beta-D-manno-heptose from D-glycero-beta-D-manno-heptose 7-phosphate: step 1/4. It functions in the pathway nucleotide-sugar biosynthesis; ADP-L-glycero-beta-D-manno-heptose biosynthesis; ADP-L-glycero-beta-D-manno-heptose from D-glycero-beta-D-manno-heptose 7-phosphate: step 3/4. Functionally, catalyzes the phosphorylation of D-glycero-D-manno-heptose 7-phosphate at the C-1 position to selectively form D-glycero-beta-D-manno-heptose-1,7-bisphosphate. Catalyzes the ADP transfer from ATP to D-glycero-beta-D-manno-heptose 1-phosphate, yielding ADP-D-glycero-beta-D-manno-heptose. The protein is Bifunctional protein HldE of Geobacter sulfurreducens (strain ATCC 51573 / DSM 12127 / PCA).